We begin with the raw amino-acid sequence, 199 residues long: Probable V-type proton ATPase 20 kDa proteolipid subunit (199 aa).

Residues 1–3 (MSL) lie on the Vacuolar side of the membrane. A helical membrane pass occupies residues 4–24 (FSTSLWTTTVMSIIVGLYMLF). Residues 25-46 (HNSGESFDFGSFLLDTSPYTWG) are Cytoplasmic-facing. A helical membrane pass occupies residues 47-67 (LLGIASCVAFGIIGAAWGIFI). The Vacuolar portion of the chain corresponds to 68-86 (CGTSILGGAVKAPRIKTKN). A helical transmembrane segment spans residues 87–107 (LISIIFCEVVAIYSLIIAIVF). Residues 108 to 130 (SAKINDINPAGFYTKSHYYTGFA) lie on the Cytoplasmic side of the membrane. A helical membrane pass occupies residues 131 to 151 (LFWGGITVGLCNLICGVCVGI). Over 152-170 (TGSSAALADAQDASLFVKV) the chain is Vacuolar. A helical transmembrane segment spans residues 171–191 (LVVEIFGSVLGLFGLIVGLLI). Topologically, residues 192–199 (GGKASDFS) are cytoplasmic.

Belongs to the V-ATPase proteolipid subunit family. As to quaternary structure, V-ATPase is a heteromultimeric enzyme composed of a peripheral catalytic V1 complex (components A to H) attached to an integral membrane V0 proton pore complex (components: a, c, c', c'', d, e, f and VOA1). The decameric c-ring forms the proton-conducting pore, and is composed of eight proteolipid subunits c, one subunit c' and one subunit c''.

The protein localises to the vacuole membrane. Its function is as follows. Proton-conducting pore forming subunit of the V0 complex of vacuolar(H+)-ATPase (V-ATPase), a multisubunit enzyme composed of a peripheral complex (V1) that hydrolyzes ATP and a membrane integral complex (V0) that translocates protons. V-ATPase is responsible for acidifying and maintaining the pH of intracellular compartments. This chain is Probable V-type proton ATPase 20 kDa proteolipid subunit (vma16), found in Schizosaccharomyces pombe (strain 972 / ATCC 24843) (Fission yeast).